The chain runs to 284 residues: 4-hydroxybenzoate octaprenyltransferase (284 aa).

The next 9 membrane-spanning stretches (helical) occupy residues 19–39 (IPIL…SHGL), 42–62 (ISYL…GCII), 85–105 (GQLS…VAFI), 107–127 (VLFL…LAIL), 134–154 (FFAI…FMAF), 165–185 (AWIF…IYAL), 211–231 (ILLF…YCDF), 233–253 (SFFY…YFLY), and 261–281 (CINA…IAVI).

Belongs to the UbiA prenyltransferase family. The cofactor is Mg(2+).

The protein localises to the cell inner membrane. It carries out the reaction all-trans-octaprenyl diphosphate + 4-hydroxybenzoate = 4-hydroxy-3-(all-trans-octaprenyl)benzoate + diphosphate. It participates in cofactor biosynthesis; ubiquinone biosynthesis. Catalyzes the prenylation of para-hydroxybenzoate (PHB) with an all-trans polyprenyl group. Mediates the second step in the final reaction sequence of ubiquinone-8 (UQ-8) biosynthesis, which is the condensation of the polyisoprenoid side chain with PHB, generating the first membrane-bound Q intermediate 3-octaprenyl-4-hydroxybenzoate. In Francisella tularensis subsp. tularensis (strain FSC 198), this protein is 4-hydroxybenzoate octaprenyltransferase.